Reading from the N-terminus, the 220-residue chain is 7-cyano-7-deazaguanine synthase (220 aa).

10–20 contacts ATP; it reads FSGGQDSTTCL. Residues C186, C195, C198, and C201 each coordinate Zn(2+).

This sequence belongs to the QueC family. As to quaternary structure, homodimer. Zn(2+) serves as cofactor.

The catalysed reaction is 7-carboxy-7-deazaguanine + NH4(+) + ATP = 7-cyano-7-deazaguanine + ADP + phosphate + H2O + H(+). It participates in purine metabolism; 7-cyano-7-deazaguanine biosynthesis. Functionally, catalyzes the ATP-dependent conversion of 7-carboxy-7-deazaguanine (CDG) to 7-cyano-7-deazaguanine (preQ(0)). The protein is 7-cyano-7-deazaguanine synthase of Bacillus cereus (strain G9842).